Consider the following 282-residue polypeptide: Small ribosomal subunit protein uS2 (282 aa).

Positions Lys-260–Arg-282 are disordered. The segment covering Val-266–Arg-282 has biased composition (basic and acidic residues).

It belongs to the universal ribosomal protein uS2 family.

The sequence is that of Small ribosomal subunit protein uS2 from Wolbachia pipientis wMel.